Here is a 475-residue protein sequence, read N- to C-terminus: Ribulose bisphosphate carboxylase large chain (475 aa).

Positions 1 to 2 (MS) are excised as a propeptide. N-acetylproline is present on Pro3. Lys14 carries the post-translational modification N6,N6,N6-trimethyllysine. Positions 123 and 173 each coordinate substrate. Residue Lys175 is the Proton acceptor of the active site. Lys177 provides a ligand contact to substrate. Residues Lys201, Asp203, and Glu204 each contribute to the Mg(2+) site. An N6-carboxylysine modification is found at Lys201. The active-site Proton acceptor is His294. Residues Arg295, His327, and Ser379 each contribute to the substrate site.

Belongs to the RuBisCO large chain family. Type I subfamily. As to quaternary structure, heterohexadecamer of 8 large chains and 8 small chains; disulfide-linked. The disulfide link is formed within the large subunit homodimers. It depends on Mg(2+) as a cofactor. In terms of processing, the disulfide bond which can form in the large chain dimeric partners within the hexadecamer appears to be associated with oxidative stress and protein turnover.

The protein resides in the plastid. It is found in the chloroplast. The catalysed reaction is 2 (2R)-3-phosphoglycerate + 2 H(+) = D-ribulose 1,5-bisphosphate + CO2 + H2O. It catalyses the reaction D-ribulose 1,5-bisphosphate + O2 = 2-phosphoglycolate + (2R)-3-phosphoglycerate + 2 H(+). Its function is as follows. RuBisCO catalyzes two reactions: the carboxylation of D-ribulose 1,5-bisphosphate, the primary event in carbon dioxide fixation, as well as the oxidative fragmentation of the pentose substrate in the photorespiration process. Both reactions occur simultaneously and in competition at the same active site. The chain is Ribulose bisphosphate carboxylase large chain from Betula papyrifera (Paper birch).